The sequence spans 304 residues: Lipid droplet-associated hydrolase (304 aa).

Serine 119 acts as the Nucleophile in catalysis. Catalysis depends on charge relay system residues aspartate 250 and histidine 279.

This sequence belongs to the AB hydrolase superfamily. LDAH family.

It localises to the lipid droplet. It carries out the reaction a cholesterol ester + H2O = cholesterol + a fatty acid + H(+). Functionally, probable serine lipid hydrolase associated with lipid droplets. Has low cholesterol esterase activity. Appears to lack triglyceride lipase activity. Involved in cholesterol and triglyceride homeostasis; stimulates cellular triglyceride accumulation and cellular cholesterol release. The protein is Lipid droplet-associated hydrolase of Dictyostelium discoideum (Social amoeba).